The sequence spans 94 residues: ESAT-6-like protein EsxL (94 aa).

This sequence belongs to the WXG100 family. ESAT-6 subfamily. Strongly interacts with EsxK to form a heterodimeric complex under reducing conditions.

Its subcellular location is the secreted. In Mycobacterium bovis (strain ATCC BAA-935 / AF2122/97), this protein is ESAT-6-like protein EsxL.